The following is a 347-amino-acid chain: Protein RecA (347 aa).

Residue 64–71 (GPESSGKT) participates in ATP binding.

Belongs to the RecA family.

The protein resides in the cytoplasm. Functionally, can catalyze the hydrolysis of ATP in the presence of single-stranded DNA, the ATP-dependent uptake of single-stranded DNA by duplex DNA, and the ATP-dependent hybridization of homologous single-stranded DNAs. It interacts with LexA causing its activation and leading to its autocatalytic cleavage. In Bartonella bacilliformis (strain ATCC 35685 / KC583 / Herrer 020/F12,63), this protein is Protein RecA.